The sequence spans 440 residues: Enolase (440 aa).

A (2R)-2-phosphoglycerate-binding site is contributed by glutamine 168. Glutamate 210 functions as the Proton donor in the catalytic mechanism. Positions 249, 300, and 326 each coordinate Mg(2+). Residues lysine 351, arginine 380, serine 381, and lysine 402 each contribute to the (2R)-2-phosphoglycerate site. Catalysis depends on lysine 351, which acts as the Proton acceptor.

Belongs to the enolase family. It depends on Mg(2+) as a cofactor.

The protein localises to the cytoplasm. It localises to the secreted. The protein resides in the cell surface. It catalyses the reaction (2R)-2-phosphoglycerate = phosphoenolpyruvate + H2O. The protein operates within carbohydrate degradation; glycolysis; pyruvate from D-glyceraldehyde 3-phosphate: step 4/5. In terms of biological role, catalyzes the reversible conversion of 2-phosphoglycerate (2-PG) into phosphoenolpyruvate (PEP). It is essential for the degradation of carbohydrates via glycolysis. The protein is Enolase of Ureaplasma parvum serovar 3 (strain ATCC 27815 / 27 / NCTC 11736).